A 194-amino-acid chain; its full sequence is uncharacterized protein (194 aa).

The HTH tetR-type domain occupies 6–66 (SGKYEKILQA…AIAENLLTHT (61 aa)). The segment at residues 29 to 48 (SISDIVKKAGTAQGTFYLYF) is a DNA-binding region (H-T-H motif).

This is an uncharacterized protein from Bacillus subtilis (strain 168).